A 368-amino-acid chain; its full sequence is UDP-N-acetylglucosamine--N-acetylmuramyl-(pentapeptide) pyrophosphoryl-undecaprenol N-acetylglucosamine transferase (368 aa).

UDP-N-acetyl-alpha-D-glucosamine is bound by residues 13–15, N127, R168, S200, I254, and Q299; that span reads TGG.

Belongs to the glycosyltransferase 28 family. MurG subfamily.

The protein localises to the cell inner membrane. It carries out the reaction di-trans,octa-cis-undecaprenyl diphospho-N-acetyl-alpha-D-muramoyl-L-alanyl-D-glutamyl-meso-2,6-diaminopimeloyl-D-alanyl-D-alanine + UDP-N-acetyl-alpha-D-glucosamine = di-trans,octa-cis-undecaprenyl diphospho-[N-acetyl-alpha-D-glucosaminyl-(1-&gt;4)]-N-acetyl-alpha-D-muramoyl-L-alanyl-D-glutamyl-meso-2,6-diaminopimeloyl-D-alanyl-D-alanine + UDP + H(+). It participates in cell wall biogenesis; peptidoglycan biosynthesis. In terms of biological role, cell wall formation. Catalyzes the transfer of a GlcNAc subunit on undecaprenyl-pyrophosphoryl-MurNAc-pentapeptide (lipid intermediate I) to form undecaprenyl-pyrophosphoryl-MurNAc-(pentapeptide)GlcNAc (lipid intermediate II). The sequence is that of UDP-N-acetylglucosamine--N-acetylmuramyl-(pentapeptide) pyrophosphoryl-undecaprenol N-acetylglucosamine transferase from Parabacteroides distasonis (strain ATCC 8503 / DSM 20701 / CIP 104284 / JCM 5825 / NCTC 11152).